The following is a 386-amino-acid chain: Chorismate synthase (386 aa).

Residues arginine 45 and arginine 51 each contribute to the NADP(+) site. Residues 131 to 133, 251 to 252, serine 294, 309 to 313, and arginine 335 contribute to the FMN site; these read RTS, QG, and KPIPS.

This sequence belongs to the chorismate synthase family. In terms of assembly, homotetramer. FMNH2 is required as a cofactor.

It catalyses the reaction 5-O-(1-carboxyvinyl)-3-phosphoshikimate = chorismate + phosphate. The protein operates within metabolic intermediate biosynthesis; chorismate biosynthesis; chorismate from D-erythrose 4-phosphate and phosphoenolpyruvate: step 7/7. Functionally, catalyzes the anti-1,4-elimination of the C-3 phosphate and the C-6 proR hydrogen from 5-enolpyruvylshikimate-3-phosphate (EPSP) to yield chorismate, which is the branch point compound that serves as the starting substrate for the three terminal pathways of aromatic amino acid biosynthesis. This reaction introduces a second double bond into the aromatic ring system. The polypeptide is Chorismate synthase (Clostridium tetani (strain Massachusetts / E88)).